The primary structure comprises 176 residues: Centromere protein R (176 aa).

A Glycyl lysine isopeptide (Lys-Gly) (interchain with G-Cter in SUMO2) cross-link involves residue lysine 8. At serine 17 the chain carries Phosphoserine. Residues 20–50 are DD1; that stretch reads PSKIVRKKSITAYSPTTGTYQLSPFSSPATP. A Glycyl lysine isopeptide (Lys-Gly) (interchain with G-Cter in SUMO2) cross-link involves residue lysine 22. Serine 28 bears the Phosphoserine mark. Residues 34 to 48 show a composition bias toward polar residues; that stretch reads PTTGTYQLSPFSSPA. Positions 34–78 are disordered; it reads PTTGTYQLSPFSSPATPKEQEHRNGPSNETRKRSNLSSPVRQEST. The span at 51-65 shows a compositional bias: basic and acidic residues; sequence KEQEHRNGPSNETRK. The short motif at 63-66 is the Nuclear localization signal element; sequence TRKR. Serine 71 bears the Phosphoserine mark. A coiled-coil region spans residues 82–112; it reads RDGFMVLLSKIEISSEKTMEIMKNLSSIQAL. Residues 171-175 carry the LXXIL motif motif; it reads LKAIL.

In terms of assembly, homodimer; mediated by the coiled coil domain. Interacts with CCNA2 and MTA1. Interacts with NFKB1 NF-kappa-B subunit. Component of the CENPA-CAD complex, composed of CENPI, CENPK, CENPL, CENPO, CENPP, CENPQ, CENPR and CENPS. The CENPA-CAD complex interacts with the CENPA-NAC complex, at least composed of CENPA, CENPC, CENPH, CENPM, CENPN, CENPT and CENPU. Interacts with TASOR. Expressed in the spermatogonia and spermatocytes.

The protein localises to the nucleus. The protein resides in the chromosome. It localises to the centromere. Its subcellular location is the kinetochore. In terms of biological role, transcription coregulator that can have both coactivator and corepressor functions. Involved in the coactivation of nuclear receptors for retinoid X (RXRs) and thyroid hormone (TRs) in a ligand-dependent fashion. In contrast, it does not coactivate nuclear receptors for retinoic acid, vitamin D, progesterone receptor, nor glucocorticoid. Acts as a coactivator for estrogen receptor alpha. Acts as a transcriptional corepressor via its interaction with the NFKB1 NF-kappa-B subunit, possibly by interfering with the transactivation domain of NFKB1. Induces apoptosis in breast cancer cells, but not in other cancer cells, via a caspase-2 mediated pathway that involves mitochondrial membrane permeabilization but does not require other caspases. May also act as an inhibitor of cyclin A-associated kinase. Also acts a component of the CENPA-CAD (nucleosome distal) complex, a complex recruited to centromeres which is involved in assembly of kinetochore proteins, mitotic progression and chromosome segregation. May be involved in incorporation of newly synthesized CENPA into centromeres via its interaction with the CENPA-NAC complex. The sequence is that of Centromere protein R (Itgb3bp) from Mus musculus (Mouse).